We begin with the raw amino-acid sequence, 43 residues long: Augerpeptide hhe9.2 (43 aa).

An EGF-like domain is found at 2 to 40 (EEVGCFPNVCKNDGNCSIETSTGMTRCQCLEGYTGHVCE). 3 disulfides stabilise this stretch: C6-C28, C11-C30, and C17-C39.

Expressed by the venom duct.

The protein localises to the secreted. The polypeptide is Augerpeptide hhe9.2 (Hastula hectica (Sea snail)).